Reading from the N-terminus, the 930-residue chain is Nonribosomal peptide synthetase btyA (930 aa).

The interval 31 to 440 is adenylation (A) domain; the sequence is ESPHRLTYAE…RGRSKELICI (410 aa). The Carrier domain occupies 570–647; the sequence is PAGNETETLL…VLARQLQDGH (78 aa). Ser607 is subject to O-(pantetheine 4'-phosphoryl)serine. Residues 667–920 form a thioesterase (TE) domain region; sequence PLWLIHPIGG…EDNVHKVYRV (254 aa).

This sequence belongs to the NRP synthetase family.

The enzyme catalyses 2 3-(4-hydroxyphenyl)pyruvate + H(+) = (2S)-2-(4-hydoxybenzyl)-3-(4-hydroxyphenyl)-2-furonol carboxylate + H2O. Its pathway is secondary metabolite biosynthesis. Nonribosomal peptide synthetase; part of the gene cluster that mediates the biosynthesis of butyrolactones, natural products that show a wide range of biological activities such as antitumor, antiparasitic or anti-inflammatory activity. The nonribosomal peptide synthetase btyA is responsible for the production of butyrolactone II, the core structure of butyrolactones. BtyA first activates 4-hydroxyphenylpyruvate (HPPA) through its A domain to AMP-HPPA. The HPPA unit is then loaded to the T domain and eventually transferred to the TE domain. Upon loading of another HPPA unit to the T domain, the TE domain promotes the enolate formation on the unit attached. Then aldol condensation establishes the carbon-carbon bond between the two units, followed by ester cyclization, and keto-enol tautomerization to yield the gamma-butyrolactone core. Hydrolysis, and finally esterification of the exposed carboxylic acid group yields butyrolactone II. Two additional enzymes, a prenyltransferase and an epoxidase, may be involved in the tailoring modifications of butyrolactone II to give butyrolactone III and butyrolactone I. This is Nonribosomal peptide synthetase btyA from Aspergillus terreus (strain NIH 2624 / FGSC A1156).